Here is a 434-residue protein sequence, read N- to C-terminus: Zinc finger protein Pegasus (434 aa).

The segment at 33–57 (VSSDKEAETLQGAGTDSDQNGLDHP) is disordered. 3 consecutive C2H2-type zinc fingers follow at residues 82–104 (LKCR…IRIH), 110–132 (HRCH…MRSH), and 138–161 (YKCE…RRKH). Residues 260-274 (GQLSSLPPDTQNPAS) are compositionally biased toward polar residues. A disordered region spans residues 260–357 (GQLSSLPPDT…PSTPAPALPA (98 aa)). Low complexity predominate over residues 296–313 (CASAVSTSVAQSSSPASP). Positions 337-349 (RTSTPSISNSQPS) are enriched in polar residues. C2H2-type zinc fingers lie at residues 364 to 386 (HHCQ…MGCH) and 392 to 419 (FQCN…CCQH).

This sequence belongs to the Ikaros C2H2-type zinc-finger protein family. In terms of assembly, probably self-associates.

It localises to the nucleus. Functionally, transcriptional repressor that binds the core 5'GNNTGTNG-3' DNA consensus sequence. The chain is Zinc finger protein Pegasus (ikzf5) from Xenopus tropicalis (Western clawed frog).